Here is a 57-residue protein sequence, read N- to C-terminus: Small ribosomal subunit protein bS21 (57 aa).

Over residues 32–42 (VRRREHYEKPS) the composition is skewed to basic and acidic residues. The segment at 32 to 57 (VRRREHYEKPSQRRKRKLEASRRRRR) is disordered. Basic residues predominate over residues 43-57 (QRRKRKLEASRRRRR).

Belongs to the bacterial ribosomal protein bS21 family.

The chain is Small ribosomal subunit protein bS21 from Synechococcus elongatus (strain ATCC 33912 / PCC 7942 / FACHB-805) (Anacystis nidulans R2).